A 62-amino-acid polypeptide reads, in one-letter code: Large ribosomal subunit protein bL28 (62 aa).

It belongs to the bacterial ribosomal protein bL28 family.

This is Large ribosomal subunit protein bL28 from Thermoanaerobacter sp. (strain X514).